Consider the following 189-residue polypeptide: Glutathione-dependent formaldehyde-activating enzyme (189 aa).

The region spanning 20–167 is the CENP-V/GFA domain; it reads FAGGTLVCKC…LKELGLEPYD (148 aa). Zn(2+)-binding residues include Cys-27, Cys-29, Cys-48, Cys-50, Cys-53, Cys-95, and Cys-98.

Belongs to the Gfa family. The cofactor is Zn(2+).

The enzyme catalyses S-(hydroxymethyl)glutathione = glutathione + formaldehyde. It participates in one-carbon metabolism; formaldehyde degradation; formate from formaldehyde (glutathione route): step 1/3. Catalyzes the condensation of formaldehyde and glutathione to S-hydroxymethylglutathione. The sequence is that of Glutathione-dependent formaldehyde-activating enzyme from Rhodopseudomonas palustris (strain BisB18).